The primary structure comprises 247 residues: Transmembrane protein 69 (247 aa).

5 helical membrane-spanning segments follow: residues 97-117 (ALCVTLAGLIPFVAPPLVMLM), 122-142 (IPILAFTQMAYGASFLSFLGG), 159-179 (YLNLASSAAPLFFSWFAFLIS), 185-205 (AIVTVIMGMGVAFHLELFLLP), and 216-236 (IVVTLLATFSFIITLVVKSSF).

The protein resides in the membrane. The polypeptide is Transmembrane protein 69 (TMEM69) (Homo sapiens (Human)).